The following is a 254-amino-acid chain: Flavin-dependent thymidylate synthase (254 aa).

The ThyX domain occupies 7 to 237 (LRVQLIAKTE…PAVFADFEIT (231 aa)). DUMP-binding positions include 92–95 (ELIR), 103–107 (QLSQR), and H176. FAD-binding positions include 95 to 97 (RHR) and Q103. Positions 95–105 (RHRHFSYSQLS) match the ThyX motif motif. FAD-binding positions include 192 to 194 (NYR) and H198. R203 lines the dUMP pocket. The Involved in ionization of N3 of dUMP, leading to its activation role is filled by R203.

This sequence belongs to the thymidylate synthase ThyX family. Homotetramer. Requires FAD as cofactor.

It catalyses the reaction dUMP + (6R)-5,10-methylene-5,6,7,8-tetrahydrofolate + NADPH + H(+) = dTMP + (6S)-5,6,7,8-tetrahydrofolate + NADP(+). Its pathway is pyrimidine metabolism; dTTP biosynthesis. Catalyzes the reductive methylation of 2'-deoxyuridine-5'-monophosphate (dUMP) to 2'-deoxythymidine-5'-monophosphate (dTMP) while utilizing 5,10-methylenetetrahydrofolate (mTHF) as the methyl donor, and NADPH and FADH(2) as the reductant. This chain is Flavin-dependent thymidylate synthase, found in Mycobacterium leprae (strain Br4923).